Consider the following 195-residue polypeptide: Large ribosomal subunit protein uL18 (195 aa).

This sequence belongs to the universal ribosomal protein uL18 family. As to quaternary structure, part of the 50S ribosomal subunit. Contacts the 5S and 23S rRNAs.

Its function is as follows. This is one of the proteins that bind and probably mediate the attachment of the 5S RNA into the large ribosomal subunit, where it forms part of the central protuberance. The polypeptide is Large ribosomal subunit protein uL18 (Methanocaldococcus jannaschii (strain ATCC 43067 / DSM 2661 / JAL-1 / JCM 10045 / NBRC 100440) (Methanococcus jannaschii)).